Consider the following 469-residue polypeptide: UDP-N-acetylmuramate--L-alanine ligase (469 aa).

G112–T118 is a binding site for ATP.

Belongs to the MurCDEF family.

The protein localises to the cytoplasm. The enzyme catalyses UDP-N-acetyl-alpha-D-muramate + L-alanine + ATP = UDP-N-acetyl-alpha-D-muramoyl-L-alanine + ADP + phosphate + H(+). It functions in the pathway cell wall biogenesis; peptidoglycan biosynthesis. In terms of biological role, cell wall formation. This chain is UDP-N-acetylmuramate--L-alanine ligase, found in Herminiimonas arsenicoxydans.